A 96-amino-acid polypeptide reads, in one-letter code: Integration host factor subunit beta (96 aa).

The protein belongs to the bacterial histone-like protein family. As to quaternary structure, heterodimer of an alpha and a beta chain.

Its function is as follows. This protein is one of the two subunits of integration host factor, a specific DNA-binding protein that functions in genetic recombination as well as in transcriptional and translational control. This is Integration host factor subunit beta from Dichelobacter nodosus (strain VCS1703A).